A 121-amino-acid polypeptide reads, in one-letter code: Small ribosomal subunit protein uS13 (121 aa).

The disordered stretch occupies residues 97-121; sequence VRGQRTRTNARTRRGARKTVAGKKK. A compositionally biased stretch (basic residues) spans 100-121; the sequence is QRTRTNARTRRGARKTVAGKKK.

The protein belongs to the universal ribosomal protein uS13 family. In terms of assembly, part of the 30S ribosomal subunit. Forms a loose heterodimer with protein S19. Forms two bridges to the 50S subunit in the 70S ribosome.

Functionally, located at the top of the head of the 30S subunit, it contacts several helices of the 16S rRNA. In the 70S ribosome it contacts the 23S rRNA (bridge B1a) and protein L5 of the 50S subunit (bridge B1b), connecting the 2 subunits; these bridges are implicated in subunit movement. Contacts the tRNAs in the A and P-sites. This Synechococcus sp. (strain CC9902) protein is Small ribosomal subunit protein uS13.